Here is a 209-residue protein sequence, read N- to C-terminus: MGKHRRNNSNATRKAVAASAVALGATAAIASPAQAAEVVVPGTGISVDIAGIETTPGLNNVPGIDQWIPSLSSQAAPTAYAAVIDAPAAQAAPAASTGQAIVDAARTKIGSPYGWGATGPNAFDCSGLTSWAYSQVGKSIPRTSQAQAAQGTPVAYSDLQAGDIVAFYSGATHVGIYSGHGTVIHALNSSTPLSEHSLDYMPFHSAVRF.

Positions 1 to 35 (MGKHRRNNSNATRKAVAASAVALGATAAIASPAQA) are cleaved as a signal peptide. Positions 95–209 (ASTGQAIVDA…YMPFHSAVRF (115 aa)) constitute a NlpC/P60 domain. Catalysis depends on Cys125, which acts as the Nucleophile. The Proton acceptor role is filled by His173. Residue His185 is part of the active site.

It belongs to the peptidase C40 family.

The protein resides in the secreted. The protein is Probable endopeptidase Cgl2188 of Corynebacterium glutamicum (strain ATCC 13032 / DSM 20300 / JCM 1318 / BCRC 11384 / CCUG 27702 / LMG 3730 / NBRC 12168 / NCIMB 10025 / NRRL B-2784 / 534).